The chain runs to 97 residues: Co-chaperonin GroES (97 aa).

The protein belongs to the GroES chaperonin family. In terms of assembly, heptamer of 7 subunits arranged in a ring. Interacts with the chaperonin GroEL.

The protein localises to the cytoplasm. Functionally, together with the chaperonin GroEL, plays an essential role in assisting protein folding. The GroEL-GroES system forms a nano-cage that allows encapsulation of the non-native substrate proteins and provides a physical environment optimized to promote and accelerate protein folding. GroES binds to the apical surface of the GroEL ring, thereby capping the opening of the GroEL channel. The chain is Co-chaperonin GroES from Oleispira antarctica.